The primary structure comprises 161 residues: MKGSCETTMVKSLLLLMLGFAIISSGAARRNPKVGLSALQKAGNCPPLEDNSVRVDIRIFNQNQGISVPRDFQNRSSSPWDYNITRDPDRFPSEIAEAQCRHSGCINAQGQEDGSMNSVPIQQEILVLRREPQGCSNSFRLEKMLIKVGCTCVTPIVHHAA.

The signal sequence occupies residues 1-28 (MKGSCETTMVKSLLLLMLGFAIISSGAA). Asparagine 83 carries N-linked (GlcNAc...) asparagine glycosylation. Cystine bridges form between cysteine 100/cysteine 150 and cysteine 105/cysteine 152.

Belongs to the IL-17 family. As to quaternary structure, homodimer; disulfide-linked. Heterodimer with IL17A (IL17A-IL17F). Forms complexes with IL17RA and IL17RC receptors with 2:1 binding stoichiometry: two receptor chains for one interleukin molecule. IL17F homodimer forms predominantly complexes with IL17RC homodimer, whereas IL17A-IL17F favors complexes with IL17RA-IL17RC. IL17RA and IL17RC chains cannot distinguish between IL17A and IL17F molecules, potentially enabling the formation of topologically distinct complexes.

The protein resides in the secreted. Functionally, effector cytokine of innate and adaptive immune system involved in antimicrobial host defense and maintenance of tissue integrity. IL17A-IL17F signals via IL17RA-IL17RC heterodimeric receptor complex, triggering homotypic interaction of IL17RA and IL17RC chains with TRAF3IP2 adapter through SEFIR domains. This leads to downstream TRAF6-mediated activation of NF-kappa-B and MAPkinase pathways ultimately resulting in transcriptional activation of cytokines, chemokines, antimicrobial peptides and matrix metalloproteinases, with potential strong immune inflammation. IL17A-IL17F is primarily involved in host defense against extracellular bacteria and fungi by inducing neutrophilic inflammation. As signature effector cytokine of T-helper 17 cells (Th17), primarily induces neutrophil activation and recruitment at infection and inflammatory sites. Stimulates the production of antimicrobial beta-defensins DEFB1, DEFB103A, and DEFB104A by mucosal epithelial cells, limiting the entry of microbes through the epithelial barriers. IL17F homodimer can signal via IL17RC homodimeric receptor complex, triggering downstream activation of TRAF6 and NF-kappa-B signaling pathway. Via IL17RC induces transcriptional activation of IL33, a potent cytokine that stimulates group 2 innate lymphoid cells and adaptive T-helper 2 cells involved in pulmonary allergic response to fungi. Likely via IL17RC, promotes sympathetic innervation of peripheral organs by coordinating the communication between gamma-delta T cells and parenchymal cells. Stimulates sympathetic innervation of thermogenic adipose tissue by driving TGFB1 expression. Regulates the composition of intestinal microbiota and immune tolerance by inducing antimicrobial proteins that specifically control the growth of commensal Firmicutes and Bacteroidetes. This chain is Interleukin-17F (Il17f), found in Rattus norvegicus (Rat).